We begin with the raw amino-acid sequence, 158 residues long: MTAIIDVQQAFEGEEVISIDIPSPAELELWANAVLKYEGLSDQEVTIRFTDEAESQSLNSEYRGKHKPTNVLSFPFEAPPGIEINLLGDLVICAPVISREAEEQDKQVSDHYAHMTVHGLLHLMGYDHIDDAEAEEMEGKEIDILAQLGIDNPYDADE.

Positions 118, 122, and 128 each coordinate Zn(2+).

The protein belongs to the endoribonuclease YbeY family. The cofactor is Zn(2+).

The protein localises to the cytoplasm. In terms of biological role, single strand-specific metallo-endoribonuclease involved in late-stage 70S ribosome quality control and in maturation of the 3' terminus of the 16S rRNA. The chain is Endoribonuclease YbeY from Alteromonas mediterranea (strain DSM 17117 / CIP 110805 / LMG 28347 / Deep ecotype).